Consider the following 192-residue polypeptide: Fe/S biogenesis protein NfuA (192 aa).

The [4Fe-4S] cluster site is built by cysteine 149 and cysteine 152.

It belongs to the NfuA family. In terms of assembly, homodimer. It depends on [4Fe-4S] cluster as a cofactor.

In terms of biological role, involved in iron-sulfur cluster biogenesis. Binds a 4Fe-4S cluster, can transfer this cluster to apoproteins, and thereby intervenes in the maturation of Fe/S proteins. Could also act as a scaffold/chaperone for damaged Fe/S proteins. This is Fe/S biogenesis protein NfuA from Shewanella pealeana (strain ATCC 700345 / ANG-SQ1).